The chain runs to 180 residues: Shikimate kinase (180 aa).

14-19 (GAGKSC) lines the ATP pocket. Ser18 is a Mg(2+) binding site. Substrate is bound by residues Asp36, Arg60, and Gly82. Residue Arg120 coordinates ATP. Residue Arg139 participates in substrate binding.

The protein belongs to the shikimate kinase family. In terms of assembly, monomer. The cofactor is Mg(2+).

Its subcellular location is the cytoplasm. The enzyme catalyses shikimate + ATP = 3-phosphoshikimate + ADP + H(+). It participates in metabolic intermediate biosynthesis; chorismate biosynthesis; chorismate from D-erythrose 4-phosphate and phosphoenolpyruvate: step 5/7. Its function is as follows. Catalyzes the specific phosphorylation of the 3-hydroxyl group of shikimic acid using ATP as a cosubstrate. The chain is Shikimate kinase from Xanthomonas oryzae pv. oryzae (strain PXO99A).